We begin with the raw amino-acid sequence, 292 residues long: Large ribosomal subunit protein bL19m (292 aa).

The segment at 41 to 60 (SRFQSTGPSEPGGFKPPPKP) is disordered. Position 77 is a phosphoserine (serine 77).

It belongs to the bacterial ribosomal protein bL19 family. In terms of assembly, component of the mitochondrial ribosome large subunit (39S) which comprises a 16S rRNA and about 50 distinct proteins.

The protein resides in the mitochondrion. The chain is Large ribosomal subunit protein bL19m (Mrpl19) from Mus musculus (Mouse).